Here is a 221-residue protein sequence, read N- to C-terminus: Histone H1.3 (221 aa).

Over residues 1 to 17 (MSETAPLAPTIPAPAEK) the composition is skewed to low complexity. The segment at 1 to 43 (MSETAPLAPTIPAPAEKTPVKKKAKKAGATAGKRKASGPPVSE) is disordered. Ser2 is subject to N-acetylserine. At Ser2 the chain carries Phosphoserine. Lys17 carries the post-translational modification N6-acetyllysine. Thr18 carries the post-translational modification Phosphothreonine. The segment covering 20–36 (VKKKAKKAGATAGKRKA) has biased composition (basic residues). N6-(beta-hydroxybutyryl)lysine occurs at positions 35, 47, and 53. Residues 37–110 (SGPPVSELIT…GASGSFKLNK (74 aa)) form the H15 domain. Arg55 carries the post-translational modification Citrulline. Residues Lys65, Lys76, Lys86, and Lys91 each carry the N6-(beta-hydroxybutyryl)lysine modification. Residues 90–221 (SKGTLVQTKG…KAKKAAPKKK (132 aa)) are disordered. At Ser105 the chain carries Phosphoserine; by PKC. The residue at position 107 (Lys107) is an N6-(beta-hydroxybutyryl)lysine. Basic residues-rich tracts occupy residues 120 to 141 (KAKK…KPKK), 150 to 161 (KSIKKTPKKVKK), and 170 to 179 (KVAKSAKKVK). Position 170 is an N6-(beta-hydroxybutyryl)lysine (Lys170). The segment covering 180-193 (TPQPKKAAKSPAKA) has biased composition (low complexity). Basic residues predominate over residues 194–221 (KAPKPKAAKPKSGKPKVTKAKKAAPKKK).

Belongs to the histone H1/H5 family. Post-translationally, H1 histones are progressively phosphorylated during the cell cycle, becoming maximally phosphorylated during late G2 phase and M phase, and being dephosphorylated sharply thereafter. In terms of processing, citrullination at Arg-55 (H1R54ci) by PADI4 takes place within the DNA-binding site of H1 and results in its displacement from chromatin and global chromatin decondensation, thereby promoting pluripotency and stem cell maintenance.

The protein localises to the nucleus. The protein resides in the chromosome. In terms of biological role, histone H1 protein binds to linker DNA between nucleosomes forming the macromolecular structure known as the chromatin fiber. Histones H1 are necessary for the condensation of nucleosome chains into higher-order structured fibers. Also acts as a regulator of individual gene transcription through chromatin remodeling, nucleosome spacing and DNA methylation. This Homo sapiens (Human) protein is Histone H1.3.